Consider the following 161-residue polypeptide: Phosphopantetheine adenylyltransferase (161 aa).

Ser-11 provides a ligand contact to substrate. Residues 11–12 and His-19 each bind ATP; that span reads SF. Lys-43, Leu-75, and Arg-89 together coordinate substrate. ATP-binding positions include 90–92, Glu-100, and 125–131; these read GLR and YSFISSS.

It belongs to the bacterial CoaD family. As to quaternary structure, homohexamer. Mg(2+) is required as a cofactor.

Its subcellular location is the cytoplasm. The enzyme catalyses (R)-4'-phosphopantetheine + ATP + H(+) = 3'-dephospho-CoA + diphosphate. It participates in cofactor biosynthesis; coenzyme A biosynthesis; CoA from (R)-pantothenate: step 4/5. Its function is as follows. Reversibly transfers an adenylyl group from ATP to 4'-phosphopantetheine, yielding dephospho-CoA (dPCoA) and pyrophosphate. The sequence is that of Phosphopantetheine adenylyltransferase from Staphylococcus epidermidis (strain ATCC 35984 / DSM 28319 / BCRC 17069 / CCUG 31568 / BM 3577 / RP62A).